The following is a 497-amino-acid chain: MSDKDPPESPVVTGVASTLKDENCEPVEKPEDKSQPVVSTRKRPETKPSSDLEASALPAQVSLAVAKETASKDVPQTGWGYWGSWGKSLLSSASATVATVGQGISNVIEKAETSLGIPSPTEISAEVKQAAGEKNAGENGSLLVAAPFGMLSTISTAVQSTGKSVISGGLDALEFIGKKTMDVIAEGDPGFKRTKGLMNRTSTLSQVLREAKDKEEQRPSNEVTMETDKKTHYGLLFDEFQGLSHLEALEMLSRESEIKVKSILSSLSGEELQTTRLELEQLKEVFSLAEFCEEEEEERQGDDNFTKEITDLFAQLHVSSRPEKLARARNTAYKWIRTSLARPVAEKEEGEKESEAGNTEEAQKHSIEDIHAFAIRSLAELTACSIELFHKTAALVLHGQKQEVTALERSQTLSQMTVMLCKDLASLSKEFTTCLTTAGVREKADVLNPVITAVFLEASNSASYIQDAFQLLLPVLQISLIESKTESSTCEPQSRDL.

Positions 1 to 54 are disordered; the sequence is MSDKDPPESPVVTGVASTLKDENCEPVEKPEDKSQPVVSTRKRPETKPSSDLEA. The segment covering 19 to 34 has biased composition (basic and acidic residues); the sequence is LKDENCEPVEKPEDKS. A phosphoserine mark is found at S84 and S205. The segment at 344–364 is disordered; sequence VAEKEEGEKESEAGNTEEAQK.

This sequence belongs to the FAM114 family.

The chain is Protein FAM114A2 (Fam114a2) from Mus musculus (Mouse).